We begin with the raw amino-acid sequence, 429 residues long: Enolase (429 aa).

Gln162 provides a ligand contact to (2R)-2-phosphoglycerate. Glu204 acts as the Proton donor in catalysis. Mg(2+) is bound by residues Asp241, Glu283, and Asp310. Positions 335, 364, 365, and 386 each coordinate (2R)-2-phosphoglycerate. Residue Lys335 is the Proton acceptor of the active site.

This sequence belongs to the enolase family. Mg(2+) is required as a cofactor.

The protein localises to the cytoplasm. It localises to the secreted. The protein resides in the cell surface. It catalyses the reaction (2R)-2-phosphoglycerate = phosphoenolpyruvate + H2O. It participates in carbohydrate degradation; glycolysis; pyruvate from D-glyceraldehyde 3-phosphate: step 4/5. Its function is as follows. Catalyzes the reversible conversion of 2-phosphoglycerate (2-PG) into phosphoenolpyruvate (PEP). It is essential for the degradation of carbohydrates via glycolysis. In Mycobacterium tuberculosis (strain ATCC 25177 / H37Ra), this protein is Enolase.